The following is a 338-amino-acid chain: DNA-directed RNA polymerase subunit alpha (338 aa).

An alpha N-terminal domain (alpha-NTD) region spans residues 1–225 (MLISQRPTLT…ELFGLARELN (225 aa)). Positions 242 to 338 (YIAAYSMPIE…YIDVEPEDAE (97 aa)) are alpha C-terminal domain (alpha-CTD). The segment at 314 to 338 (FDPSTLEGYDAETGGYIDVEPEDAE) is disordered.

This sequence belongs to the RNA polymerase alpha chain family. Homodimer. The RNAP catalytic core consists of 2 alpha, 1 beta, 1 beta' and 1 omega subunit. When a sigma factor is associated with the core the holoenzyme is formed, which can initiate transcription.

The enzyme catalyses RNA(n) + a ribonucleoside 5'-triphosphate = RNA(n+1) + diphosphate. In terms of biological role, DNA-dependent RNA polymerase catalyzes the transcription of DNA into RNA using the four ribonucleoside triphosphates as substrates. The sequence is that of DNA-directed RNA polymerase subunit alpha from Corynebacterium efficiens (strain DSM 44549 / YS-314 / AJ 12310 / JCM 11189 / NBRC 100395).